We begin with the raw amino-acid sequence, 255 residues long: Electron transfer flavoprotein beta subunit lysine methyltransferase (255 aa).

The transit peptide at 1–32 directs the protein to the mitochondrion; it reads MAFSLCWKAPRSQWSFLQALNSGFPLFPWRTV.

This sequence belongs to the methyltransferase superfamily. ETFBKMT family. Interacts with HSPD1; this protein may possibly be a methylation substrate.

The protein resides in the cytoplasm. It is found in the mitochondrion matrix. The enzyme catalyses L-lysyl-[protein] + 3 S-adenosyl-L-methionine = N(6),N(6),N(6)-trimethyl-L-lysyl-[protein] + 3 S-adenosyl-L-homocysteine + 3 H(+). Its function is as follows. Protein-lysine methyltransferase that selectively trimethylates the flavoprotein ETFB in mitochondria. Thereby, may negatively regulate the function of ETFB in electron transfer from Acyl-CoA dehydrogenases to the main respiratory chain. This chain is Electron transfer flavoprotein beta subunit lysine methyltransferase, found in Rattus norvegicus (Rat).